The primary structure comprises 618 residues: MSPSNKGTVLALILALTMVVVNGFSSRFFVEKSSLTVLNSWEMGAKHDAAIANFGLPKYGGFMIGSVVYAGQDAYGCNSFNKTFNTKSPYPKILLIDRGVCNFALKIWNGQQSGAAAVLLADNIVEPLITMDTPQDEDPDFIDKVKIPSALILRSFGDSLKKALKRGEEVILKMDWSESIPNPDERVEYELWANTNDECGVHCDKQIDFIKNFKGMAQILEKGGYTLFRPHYISWVCPKELLLSKQCRTQCINQGRYCALDTKQEFEDGYNGKDVVYENLRQLCVHKVAKEKNTSWVWWDYVTDFNIRCSMKEKKYSRECAETIVESLGLSLEKIKKCIGDPDADVENEVLKAEEAFQLGQENRGIVTIFPTLMINNAQYRGKLERTAVLKAICSGFKERTEPSICLNSDIETNECLIENGGCWQDKRSNVTACKDTFRGRVCECPVVDGVQYKGDGYTSCKPYGPARCSMNNGDCWSETRKGLTFSSCSDSETSGCRCPLGFLGDGLKCEDIDECKEKSACKCDGCKCKNNWGGYECKCSNNSIYMKEEDTCIERRSGSRSRGLFTIVVLTAIAGISLGAYIFYKYHLQSYMDSEIVSIMSQYIPLDSQSINQDSFK.

The N-terminal stretch at 1–23 (MSPSNKGTVLALILALTMVVVNG) is a signal peptide. Residues 24-563 (FSSRFFVEKS…IERRSGSRSR (540 aa)) lie on the Lumenal side of the membrane. One can recognise a PA domain in the interval 58–164 (KYGGFMIGSV…SFGDSLKKAL (107 aa)). 3 N-linked (GlcNAc...) asparagine glycosylation sites follow: asparagine 81, asparagine 293, and asparagine 430. EGF-like domains follow at residues 412-462 (ETNE…TSCK) and 465-511 (GPAR…LKCE). Intrachain disulfides connect cysteine 416–cysteine 434, cysteine 423–cysteine 443, cysteine 445–cysteine 461, cysteine 469–cysteine 489, cysteine 476–cysteine 497, cysteine 499–cysteine 510, and cysteine 540–cysteine 553. The EGF-like 3; calcium-binding domain occupies 512–554 (DIDECKEKSACKCDGCKCKNNWGGYECKCSNNSIYMKEEDTCI). N-linked (GlcNAc...) asparagine glycosylation is present at asparagine 542. A helical transmembrane segment spans residues 564-584 (GLFTIVVLTAIAGISLGAYIF). Residues 585–618 (YKYHLQSYMDSEIVSIMSQYIPLDSQSINQDSFK) lie on the Cytoplasmic side of the membrane. A Tyrosine-based internalization motif motif is present at residues 604–607 (YIPL).

Belongs to the VSR (BP-80) family. As to expression, expressed in seedlings, roots, leaves, flowers and siliques.

It localises to the membrane. The protein localises to the golgi apparatus membrane. It is found in the cytoplasmic vesicle. Its subcellular location is the clathrin-coated vesicle membrane. The protein resides in the prevacuolar compartment membrane. In terms of biological role, vacuolar-sorting receptor (VSR) involved in clathrin-coated vesicles sorting from Golgi apparatus to vacuoles. The sequence is that of Vacuolar-sorting receptor 5 (VSR5) from Arabidopsis thaliana (Mouse-ear cress).